The following is a 178-amino-acid chain: Large ribosomal subunit protein uL5 (178 aa).

The residue at position 2 (Ala-2) is an N-acetylalanine. Lys-38 participates in a covalent cross-link: Glycyl lysine isopeptide (Lys-Gly) (interchain with G-Cter in SUMO2). Phosphothreonine is present on residues Thr-44 and Thr-47. Lys-52 carries the post-translational modification N6-acetyllysine; alternate. Lys-52 participates in a covalent cross-link: Glycyl lysine isopeptide (Lys-Gly) (interchain with G-Cter in SUMO2); alternate. An N6-acetyllysine modification is found at Lys-85. A Glycyl lysine isopeptide (Lys-Gly) (interchain with G-Cter in SUMO2) cross-link involves residue Lys-154.

This sequence belongs to the universal ribosomal protein uL5 family. In terms of assembly, component of the large ribosomal subunit (LSU). Part of the 5S RNP complex, which is a LSU subcomplex composed of the 5S RNA, RPL5 and RPL11. Component of a hexameric 5S RNP precursor complex, composed of 5S RNA, RRS1, RPF2/BXDC1, RPL5, RPL11 and HEATR3; this complex acts as a precursor for ribosome assembly. Interacts with PML. Interacts with MDM2 (via its RanBP2-type zinc finger domain); negatively regulates MDM2-mediated TP53 ubiquitination and degradation. Interacts with NOP53; retains RPL11 into the nucleolus.

Its subcellular location is the nucleus. It localises to the nucleolus. The protein resides in the cytoplasm. In terms of biological role, component of the ribosome, a large ribonucleoprotein complex responsible for the synthesis of proteins in the cell. The small ribosomal subunit (SSU) binds messenger RNAs (mRNAs) and translates the encoded message by selecting cognate aminoacyl-transfer RNA (tRNA) molecules. The large subunit (LSU) contains the ribosomal catalytic site termed the peptidyl transferase center (PTC), which catalyzes the formation of peptide bonds, thereby polymerizing the amino acids delivered by tRNAs into a polypeptide chain. The nascent polypeptides leave the ribosome through a tunnel in the LSU and interact with protein factors that function in enzymatic processing, targeting, and the membrane insertion of nascent chains at the exit of the ribosomal tunnel. As part of the 5S RNP/5S ribonucleoprotein particle it is an essential component of the LSU, required for its formation and the maturation of rRNAs. It also couples ribosome biogenesis to p53/TP53 activation. As part of the 5S RNP it accumulates in the nucleoplasm and inhibits MDM2, when ribosome biogenesis is perturbed, mediating the stabilization and the activation of TP53. Promotes nucleolar location of PML. This is Large ribosomal subunit protein uL5 (RPL11) from Oryctolagus cuniculus (Rabbit).